A 340-amino-acid chain; its full sequence is UPF0284 protein Saci_0020 (340 aa).

It belongs to the UPF0284 family.

The chain is UPF0284 protein Saci_0020 from Sulfolobus acidocaldarius (strain ATCC 33909 / DSM 639 / JCM 8929 / NBRC 15157 / NCIMB 11770).